Here is a 364-residue protein sequence, read N- to C-terminus: Melatonin receptor type 1B (364 aa).

The signal sequence occupies residues 1 to 28 (MPDNSSIANCCAASGLAARPSWPGSAEA). The Extracellular segment spans residues 29–45 (EPPETPRAPWVAPMLST). The chain crosses the membrane as a helical span at residues 46-66 (VVIVTTAVDFVGNLLVILSVL). The Cytoplasmic segment spans residues 67 to 81 (RNRKLRNAGNLFVVN). Residues 82–102 (LALADLVVALYPYPLILVAIL) form a helical membrane-spanning segment. Residues 103 to 115 (HDGWVLGEIHCKA) are Extracellular-facing. A disulfide bridge links Cys113 with Cys190. Residues 116–136 (SAFVMGLSVIGSVFNITAIAI) form a helical membrane-spanning segment. Residues 137–158 (NRYWCICHSATYHRACSQWHAP) are Cytoplasmic-facing. Residues 159 to 179 (LYISLIWLLTLVALVPNFFVG) form a helical membrane-spanning segment. The Extracellular portion of the chain corresponds to 180–200 (SLEYDPRIYSCTFIQTASTQY). The chain crosses the membrane as a helical span at residues 201 to 221 (TMAVVAIHFLLPIAVVSFCYL). The Cytoplasmic portion of the chain corresponds to 222–255 (RIWILVLQARRKAKAERKLRLRPSDLRSFLTMFA). Residues 256–276 (VFVVFAICWAPLNCIGLAVAI) form a helical membrane-spanning segment. The Extracellular portion of the chain corresponds to 277 to 287 (NPEAMALQIPE). A helical membrane pass occupies residues 288–308 (GLFVTSYFLAYFNSCLNAIVY). The Cytoplasmic portion of the chain corresponds to 309–364 (GLLNQNFRREYKRILSALWSTGRCFHDASKCHLTEDLQGPVPPAAMATIPVQEGAL).

Belongs to the G-protein coupled receptor 1 family. Expressed in the hippocampus, kidney, and ovary.

The protein resides in the cell membrane. High affinity receptor for melatonin. The activity of this receptor is mediated by pertussis toxin sensitive G proteins that inhibits adenylate cyclase activity. The chain is Melatonin receptor type 1B from Rattus norvegicus (Rat).